A 213-amino-acid polypeptide reads, in one-letter code: Protein-L-isoaspartate O-methyltransferase (213 aa).

The active site involves Ser64.

It belongs to the methyltransferase superfamily. L-isoaspartyl/D-aspartyl protein methyltransferase family.

The protein localises to the cytoplasm. The enzyme catalyses [protein]-L-isoaspartate + S-adenosyl-L-methionine = [protein]-L-isoaspartate alpha-methyl ester + S-adenosyl-L-homocysteine. In terms of biological role, catalyzes the methyl esterification of L-isoaspartyl residues in peptides and proteins that result from spontaneous decomposition of normal L-aspartyl and L-asparaginyl residues. It plays a role in the repair and/or degradation of damaged proteins. This chain is Protein-L-isoaspartate O-methyltransferase, found in Christiangramia forsetii (strain DSM 17595 / CGMCC 1.15422 / KT0803) (Gramella forsetii).